The primary structure comprises 149 residues: Large ribosomal subunit protein bL9 (149 aa).

Belongs to the bacterial ribosomal protein bL9 family.

In terms of biological role, binds to the 23S rRNA. This chain is Large ribosomal subunit protein bL9, found in Mannheimia succiniciproducens (strain KCTC 0769BP / MBEL55E).